Here is a 67-residue protein sequence, read N- to C-terminus: Large ribosomal subunit protein bL35 (67 aa).

The segment covering Met1–Val16 has biased composition (basic residues). The segment at Met1–Arg24 is disordered.

This sequence belongs to the bacterial ribosomal protein bL35 family.

In Polaromonas naphthalenivorans (strain CJ2), this protein is Large ribosomal subunit protein bL35.